The following is a 199-amino-acid chain: Recombination protein RecR (199 aa).

The C4-type zinc finger occupies 58–73; that stretch reads CKVCTNLTDQEVCNIC. In terms of domain architecture, Toprim spans 81–176; it reads LLICVVEDPR…KVSRIAHGIP (96 aa).

Belongs to the RecR family.

Functionally, may play a role in DNA repair. It seems to be involved in an RecBC-independent recombinational process of DNA repair. It may act with RecF and RecO. The polypeptide is Recombination protein RecR (Alkaliphilus oremlandii (strain OhILAs) (Clostridium oremlandii (strain OhILAs))).